The sequence spans 473 residues: Mitochondrial distribution and morphology protein 10 (473 aa).

Belongs to the MDM10 family. In terms of assembly, component of the ER-mitochondria encounter structure (ERMES) or MDM complex, composed of MMM1, MDM10, MDM12 and MDM34. Associates with the mitochondrial outer membrane sorting assembly machinery SAM(core) complex.

The protein localises to the mitochondrion outer membrane. In terms of biological role, component of the ERMES/MDM complex, which serves as a molecular tether to connect the endoplasmic reticulum and mitochondria. Components of this complex are involved in the control of mitochondrial shape and protein biogenesis and may function in phospholipid exchange. MDM10 is involved in the late assembly steps of the general translocase of the mitochondrial outer membrane (TOM complex). Functions in the TOM40-specific route of the assembly of outer membrane beta-barrel proteins, including the association of TOM40 with the receptor TOM22 and small TOM proteins. Can associate with the SAM(core) complex as well as the MDM12-MMM1 complex, both involved in late steps of the major beta-barrel assembly pathway, that is responsible for biogenesis of all outer membrane beta-barrel proteins. May act as a switch that shuttles between both complexes and channels precursor proteins into the TOM40-specific pathway. Plays a role in mitochondrial morphology and in the inheritance of mitochondria. The sequence is that of Mitochondrial distribution and morphology protein 10 from Candida albicans (strain SC5314 / ATCC MYA-2876) (Yeast).